The chain runs to 1254 residues: MDSQQSDLFDTASQPDTVADEYTFLEFNTQGDSEFDYQDFGSPTAWPTPSDSISIADVADRGEGGAAADHHSEASSPSSLSAGAGNGAKVGRGGVGGSGGVSSSSQVDALAAGVGNLNFEETGDDDGFDYGKNDFTEHACKYCGISNPACVVRCNVASCRKWFCNSRGNTSGSHIVNHLVRAKHKEVCLHRDSPLGETILECYNCGCRNVFLLGFISAKTDSVVVLLCRDPCLNVNALKDMNWDLSQWCPLIDDRCFLPWLVKVPSEQEQLRARQISAQQINKIEELWKTNPDATLEDLEKPGVDDEPQPVQPKYEDAYQYQNVFAPLIKLEADYDKMMKESQSKENLTVRWDIGLNKKRVAYFVFPKEENELRLVPGDELRLRYSGDAVHPSWQSVGHVIKLTAQEEVALELRANQGVPIDVNHGFSVDFVWKSTSFDRMQGAMKNFAVDETSVSGYIYHQLLGHEVEAQMVRNTLPRRFGVPGLPELNASQVNAVKSVLQKPISLIQGPPGTGKTVTSAAIVYHMAKQGQGQVLVCAPSNVAVDQLAEKISATGLKVVRLCAKSREAVSSPVEYLTLHYQVRHLDTSEKSELHKLQQLKDEQGELSSSDEKKYKNLKRATEREITQSADVICCTCVGAADLRLSNFRFRQVLIDESTQATEPECLIPLVLGVKQVVLVGDHCQLGPVIMCKKAARAGLAQSLFERLVTLGIKPIRLQVQYRMHPALSEFPSNSFYEGTLQNGVTIIERQTTGIDFPWPVPNRPMFFYVQLGQEEISASGTSYLNRTEAANVEKLVTAFLKSGVVPSQIGVITPYEGQRAYIVNYMARNGSLRQQLYKEIEVASVDSFQGREKDYIILSCVRSNEHQGIGFLNDPRRLNVALTRARYGIVILGNPKVLSKQPLWNGLLTHYKEHECLVEGPLNNLKQSMVQFQKPRKIYNDRRLFYGGGAGMIGNDNFGSGNPNADRRGSRGRAGGSYLPSGPPNGARPGLHPAGYPIPRVPLSPFPGGPPSQPYAIPTRGPVGAVPHAPQPGNHGFGAGRGTSVGGHLPHQQATQHNVGTIGPSLNFPLDSPNSQPSPGGPLSQPGYGSQAFRDGFSMGGISQDFLADDIKSQGSHDPYNMADFATQASPGGFAVDYATQGAHGAFPGNFMNQNSQGGYSRFSGINDFMSQEYMAHGGQGLFTQAGFIDSSQDDGQQNPYGVNNPNLQSQGLPNSLYSQPFAHYNTQPLNLSGPQQSQPNQSSQNPKHPYNG.

Polar residues predominate over residues 1–16 (MDSQQSDLFDTASQPD). Disordered regions lie at residues 1–21 (MDSQQSDLFDTASQPDTVADE), 33–52 (SEFDYQDFGSPTAWPTPSDS), and 61–102 (RGEG…GGVS). Residues 1-106 (MDSQQSDLFD…GSGGVSSSSQ (106 aa)) are s/TQ motifs-rich, involved in the target transcript degradation steps of nonsense-mediated decay (NMD). Positions 61 to 73 (RGEGGAAADHHSE) are enriched in basic and acidic residues. The span at 74 to 83 (ASSPSSLSAG) shows a compositional bias: low complexity. Residues 84–100 (AGNGAKVGRGGVGGSGG) are compositionally biased toward gly residues. Residues 132 to 291 (KNDFTEHACK…NKIEELWKTN (160 aa)) enclose the Upf1 CH-rich domain. Zn(2+) is bound by residues Cys140, Cys143, Cys154, Cys159, Cys164, His174, His178, His184, Cys202, Cys205, Cys228, and Cys232. The segment at 140 to 174 (CKYCGISNPACVVRCNVASCRKWFCNSRGNTSGSH) is C3H. A CC/SHH/C region spans residues 154-184 (CNVASCRKWFCNSRGNTSGSHIVNHLVRAKH). A C4 region spans residues 202–232 (CYNCGCRNVFLLGFISAKTDSVVVLLCRDPC). Residues Gln493, 513–517 (GTGKT), Gln685, Tyr722, and Glu853 contribute to the ATP site. A Helicase ATP-binding domain is found at 497–629 (VKSVLQKPIS…RATEREITQS (133 aa)). 2 disordered regions span residues 956-1096 (NDNF…AFRD) and 1187-1254 (AGFI…PYNG). The span at 1000-1014 (PRVPLSPFPGGPPSQ) shows a compositional bias: pro residues. The segment at 1013–1254 (SQPYAIPTRG…SQNPKHPYNG (242 aa)) is s/TQ motifs-rich, involved in the target transcript degradation steps of nonsense-mediated decay (NMD). Gly residues predominate over residues 1036 to 1046 (HGFGAGRGTSV). Low complexity predominate over residues 1073-1092 (SPNSQPSPGGPLSQPGYGSQ). The span at 1191 to 1235 (DSSQDDGQQNPYGVNNPNLQSQGLPNSLYSQPFAHYNTQPLNLSG) shows a compositional bias: polar residues. The segment covering 1236 to 1248 (PQQSQPNQSSQNP) has biased composition (low complexity).

The protein belongs to the DNA2/NAM7 helicase family. In terms of processing, highly phosphorylated in S/TQ-enriched N-terminal and C-terminal regions; required for formation of mRNA surveillance complexes.

The protein localises to the cytoplasm. It localises to the P-body. The enzyme catalyses ATP + H2O = ADP + phosphate + H(+). Involved in nonsense-mediated decay (NMD) of mRNAs containing premature stop codons (premature termination codon PTC) by associating with the nuclear exon junction complex (EJC) and serving as link between the EJC core and NMD machinery. Eliminates the production of nonsense-containing RNAs (ncRNAs). Required for plant development and adaptation to environmental stresses, including plant defense and response to wounding. This Arabidopsis thaliana (Mouse-ear cress) protein is Regulator of nonsense transcripts 1 homolog (UPF1).